The chain runs to 1201 residues: Coatomer subunit alpha (1201 aa).

6 WD repeats span residues 9 to 39, 51 to 81, 93 to 123, 135 to 165, 207 to 237, and 251 to 281; these read SKST…QLWD, DHEG…KVWS, GHLD…RIWN, GHNH…RIWD, GHTR…KLWR, and GHTN…RVWD. Positions 842-862 are disordered; the sequence is AVNTTQEQEEPLGEENFNDED. Residues 848 to 862 are compositionally biased toward acidic residues; that stretch reads EQEEPLGEENFNDED.

As to quaternary structure, oligomeric complex that consists of at least the alpha, beta, beta', gamma, delta, epsilon and zeta subunits. Interacts with the ESCRT-0 subunit VPS27. Interacts with KEI1 (via C-terminal region).

The protein resides in the cytoplasm. The protein localises to the golgi apparatus membrane. It is found in the cytoplasmic vesicle. Its subcellular location is the COPI-coated vesicle membrane. Its function is as follows. The coatomer is a cytosolic protein complex that binds to dilysine motifs and reversibly associates with Golgi non-clathrin-coated vesicles, which further mediate biosynthetic protein transport from the ER, via the Golgi up to the trans Golgi network. Coatomer complex is required for budding from Golgi membranes, and is essential for the retrograde Golgi-to-ER transport of dilysine-tagged proteins. The protein is Coatomer subunit alpha (COP1) of Saccharomyces cerevisiae (strain ATCC 204508 / S288c) (Baker's yeast).